The chain runs to 518 residues: Chromosomal replication initiator protein DnaA (518 aa).

The interval 1 to 72 (MTLAEFWPLC…VREELAAGRS (72 aa)) is domain I, interacts with DnaA modulators. The interval 72–180 (SAFVFKPGEG…DAEEARYEQT (109 aa)) is domain II. A disordered region spans residues 145–172 (EPRQAAGSASRPESVAVAKARTDVQRDA). The tract at residues 181–397 (NLSPDYTFDT…GAFNRVGASS (217 aa)) is domain III, AAA+ region. The ATP site is built by glycine 225, glycine 227, lysine 228, and threonine 229. Residues 398–518 (RFMNRPVIDI…YEKLLILIQN (121 aa)) are domain IV, binds dsDNA.

Belongs to the DnaA family. In terms of assembly, oligomerizes as a right-handed, spiral filament on DNA at oriC.

It is found in the cytoplasm. Functionally, plays an essential role in the initiation and regulation of chromosomal replication. ATP-DnaA binds to the origin of replication (oriC) to initiate formation of the DNA replication initiation complex once per cell cycle. Binds the DnaA box (a 9 base pair repeat at the origin) and separates the double-stranded (ds)DNA. Forms a right-handed helical filament on oriC DNA; dsDNA binds to the exterior of the filament while single-stranded (ss)DNA is stabiized in the filament's interior. The ATP-DnaA-oriC complex binds and stabilizes one strand of the AT-rich DNA unwinding element (DUE), permitting loading of DNA polymerase. After initiation quickly degrades to an ADP-DnaA complex that is not apt for DNA replication. Binds acidic phospholipids. This is Chromosomal replication initiator protein DnaA from Neisseria meningitidis serogroup B (strain ATCC BAA-335 / MC58).